The sequence spans 218 residues: Large ribosomal subunit protein uL3 (218 aa).

The tract at residues His-126 to Arg-170 is disordered.

It belongs to the universal ribosomal protein uL3 family. Part of the 50S ribosomal subunit. Forms a cluster with proteins L14 and L19.

In terms of biological role, one of the primary rRNA binding proteins, it binds directly near the 3'-end of the 23S rRNA, where it nucleates assembly of the 50S subunit. In Prochlorococcus marinus (strain MIT 9313), this protein is Large ribosomal subunit protein uL3.